The sequence spans 137 residues: Small ribosomal subunit protein uS12 (137 aa).

Residues 1-55 (MPTINQLVRKPRKSKVEKSDSPALNKGYNSFKKTQTNVNSPQKRGVCTRVGTMTP) are disordered. The segment covering 27–42 (GYNSFKKTQTNVNSPQ) has biased composition (polar residues). Position 102 is a 3-methylthioaspartic acid (D102).

The protein belongs to the universal ribosomal protein uS12 family. Part of the 30S ribosomal subunit. Contacts proteins S8 and S17. May interact with IF1 in the 30S initiation complex.

In terms of biological role, with S4 and S5 plays an important role in translational accuracy. Its function is as follows. Interacts with and stabilizes bases of the 16S rRNA that are involved in tRNA selection in the A site and with the mRNA backbone. Located at the interface of the 30S and 50S subunits, it traverses the body of the 30S subunit contacting proteins on the other side and probably holding the rRNA structure together. The combined cluster of proteins S8, S12 and S17 appears to hold together the shoulder and platform of the 30S subunit. In Enterococcus faecalis (strain ATCC 700802 / V583), this protein is Small ribosomal subunit protein uS12.